Reading from the N-terminus, the 310-residue chain is MSIRERHLSHGAPSRIRTTVLAYLALTKPRVIELLLVTAIPAMLLADRGSVDPLLILNTLIGGMLAAAGANTLNCVADADIDKKMKRTARRPLARDTVPTRNALIFGLVLSVGSFFWLWGTSNLLSGLLAVATIAFYVFVYTLLLKRRTSQNVVWGGAAGCMPVMIGWSAVTGTIQWPALVMFAIIFFWTPPHTWALAMRYKDDYKAAGVPMLPAVATERQVTRQILIYTWLTVLTTLALALATGWLYASVAVLAGTWFLVMAHQLYNGVKRGEPVKPLRLFLQSNNYLAVVFAALAVDSVLALPTLLGS.

Transmembrane regions (helical) follow at residues 31–51 (VIEL…RGSV), 53–73 (PLLI…ANTL), 102–122 (NALI…WGTS), 124–144 (LLSG…YTLL), 149–169 (TSQN…IGWS), 170–190 (AVTG…FFWT), 242–262 (LATG…FLVM), and 289–309 (LAVV…TLLG).

It belongs to the UbiA prenyltransferase family. Protoheme IX farnesyltransferase subfamily.

It is found in the cell membrane. It catalyses the reaction heme b + (2E,6E)-farnesyl diphosphate + H2O = Fe(II)-heme o + diphosphate. The protein operates within porphyrin-containing compound metabolism; heme O biosynthesis; heme O from protoheme: step 1/1. In terms of biological role, converts heme B (protoheme IX) to heme O by substitution of the vinyl group on carbon 2 of heme B porphyrin ring with a hydroxyethyl farnesyl side group. This is Protoheme IX farnesyltransferase from Mycobacterium sp. (strain JLS).